Here is a 588-residue protein sequence, read N- to C-terminus: Autophagy-related protein 22-1 (588 aa).

Residues 35 to 55 form a helical membrane-spanning segment; that stretch reads YGWAAEVFTVCAMGSFLPITL. Asn84 is a glycosylation site (N-linked (GlcNAc...) asparagine). 3 helical membrane-spanning segments follow: residues 109–129, 144–164, and 168–188; these read TASF…ILII, LLVS…AVTP, and LLGG…FVLL. N-linked (GlcNAc...) asparagine glycosylation is present at Asn255. 8 consecutive transmembrane segments (helical) span residues 270–290, 301–321, 365–385, 399–419, 434–454, 471–493, 507–527, and 536–556; these read GIGI…LVIV, LVLF…AFWL, ILLF…VSGT, AALG…AFSW, IIAC…GFIP, FPLG…SFFG, LYAI…GFIT, and AFFF…LVDA.

It belongs to the ATG22 family.

The protein resides in the vacuole membrane. Its function is as follows. Vacuolar effluxer which mediate the efflux of amino acids resulting from autophagic degradation. The release of autophagic amino acids allows the maintenance of protein synthesis and viability during nitrogen starvation. The sequence is that of Autophagy-related protein 22-1 (atg22-1) from Emericella nidulans (strain FGSC A4 / ATCC 38163 / CBS 112.46 / NRRL 194 / M139) (Aspergillus nidulans).